The following is a 405-amino-acid chain: S-adenosylmethionine synthase (405 aa).

Position 141–146 (141–146 (GQGSVD)) interacts with ATP.

This sequence belongs to the AdoMet synthase 2 family. Requires Mg(2+) as cofactor.

It carries out the reaction L-methionine + ATP + H2O = S-adenosyl-L-methionine + phosphate + diphosphate. Its pathway is amino-acid biosynthesis; S-adenosyl-L-methionine biosynthesis; S-adenosyl-L-methionine from L-methionine: step 1/1. In terms of biological role, catalyzes the formation of S-adenosylmethionine from methionine and ATP. This is S-adenosylmethionine synthase from Methanococcus maripaludis (strain C5 / ATCC BAA-1333).